The primary structure comprises 357 residues: 3-isopropylmalate dehydrogenase (357 aa).

Substrate is bound by residues Arg-97, Arg-107, Arg-135, and Asp-224. Residues Asp-224, Asp-248, and Asp-252 each coordinate Mg(2+). 282–294 (GSAPDIAGQDKAN) is an NAD(+) binding site.

This sequence belongs to the isocitrate and isopropylmalate dehydrogenases family. LeuB type 1 subfamily. Homodimer. Mg(2+) is required as a cofactor. Mn(2+) serves as cofactor.

It localises to the cytoplasm. It catalyses the reaction (2R,3S)-3-isopropylmalate + NAD(+) = 4-methyl-2-oxopentanoate + CO2 + NADH. The protein operates within amino-acid biosynthesis; L-leucine biosynthesis; L-leucine from 3-methyl-2-oxobutanoate: step 3/4. Its function is as follows. Catalyzes the oxidation of 3-carboxy-2-hydroxy-4-methylpentanoate (3-isopropylmalate) to 3-carboxy-4-methyl-2-oxopentanoate. The product decarboxylates to 4-methyl-2 oxopentanoate. The protein is 3-isopropylmalate dehydrogenase of Synechococcus sp. (strain CC9605).